The sequence spans 418 residues: LL-diaminopimelate aminotransferase (418 aa).

Positions 25 and 52 each coordinate substrate. Pyridoxal 5'-phosphate contacts are provided by residues Y78, 115-116 (SK), Y140, N190, Y221, and 248-250 (SFS). Substrate contacts are provided by K116, Y140, and N190. An N6-(pyridoxal phosphate)lysine modification is found at K251. R259 provides a ligand contact to pyridoxal 5'-phosphate.

The protein belongs to the class-I pyridoxal-phosphate-dependent aminotransferase family. As to quaternary structure, homodimer. The cofactor is pyridoxal 5'-phosphate.

It is found in the cytoplasm. It catalyses the reaction (2S,6S)-2,6-diaminopimelate + 2-oxoglutarate = (S)-2,3,4,5-tetrahydrodipicolinate + L-glutamate + H2O + H(+). The protein operates within amino-acid biosynthesis; L-lysine biosynthesis via DAP pathway; LL-2,6-diaminopimelate from (S)-tetrahydrodipicolinate (aminotransferase route): step 1/1. Involved in the synthesis of meso-diaminopimelate (m-DAP or DL-DAP), required for both lysine and peptidoglycan biosynthesis. Catalyzes the direct conversion of tetrahydrodipicolinate to LL-diaminopimelate, a reaction that requires three enzymes in E.coli. In Methanocaldococcus jannaschii (strain ATCC 43067 / DSM 2661 / JAL-1 / JCM 10045 / NBRC 100440) (Methanococcus jannaschii), this protein is LL-diaminopimelate aminotransferase (dapL).